Here is a 211-residue protein sequence, read N- to C-terminus: Dof zinc finger protein 5 (211 aa).

Residues 37–101 (FVVAREKVEP…QRRLQDSAEA (65 aa)) form a disordered region. The segment covering 68–80 (IKREAADRDEEQR) has biased composition (basic and acidic residues). The segment at 109-163 (LPCPRCRSRDTKFCYFNNYNVNQPRHFCKACHRYWTAGGALRNVPVGAGRRKNRP) adopts a Dof-type zinc-finger fold. The Zn(2+) site is built by Cys-111, Cys-114, Cys-136, and Cys-139. A disordered region spans residues 191 to 211 (SPTSPSPVYTDRWPVTPDRPF).

The protein resides in the nucleus. Transcription factor that may transactivate seed storage protein genes in developing seeds. The sequence is that of Dof zinc finger protein 5 from Oryza sativa subsp. japonica (Rice).